The following is a 256-amino-acid chain: Thiazole synthase (256 aa).

The active-site Schiff-base intermediate with DXP is the K95. 1-deoxy-D-xylulose 5-phosphate-binding positions include G156, 182–183 (AG), and 204–205 (NT).

This sequence belongs to the ThiG family. As to quaternary structure, homotetramer. Forms heterodimers with either ThiH or ThiS.

The protein localises to the cytoplasm. The catalysed reaction is [ThiS sulfur-carrier protein]-C-terminal-Gly-aminoethanethioate + 2-iminoacetate + 1-deoxy-D-xylulose 5-phosphate = [ThiS sulfur-carrier protein]-C-terminal Gly-Gly + 2-[(2R,5Z)-2-carboxy-4-methylthiazol-5(2H)-ylidene]ethyl phosphate + 2 H2O + H(+). Its pathway is cofactor biosynthesis; thiamine diphosphate biosynthesis. In terms of biological role, catalyzes the rearrangement of 1-deoxy-D-xylulose 5-phosphate (DXP) to produce the thiazole phosphate moiety of thiamine. Sulfur is provided by the thiocarboxylate moiety of the carrier protein ThiS. In vitro, sulfur can be provided by H(2)S. The protein is Thiazole synthase of Escherichia coli O6:H1 (strain CFT073 / ATCC 700928 / UPEC).